Here is a 98-residue protein sequence, read N- to C-terminus: Carboxysome shell protein CsoS1C (98 aa).

The 86-residue stretch at 8–93 folds into the BMC domain; that stretch reads ALGMIETRGL…VHSEVENILP (86 aa).

The protein belongs to the bacterial microcompartments protein family. CsoS1 subfamily. In terms of assembly, homohexamer with a small central pore. Interacts with the N-terminus (residues 1-136) of RuBisCO (CbbL).

It localises to the carboxysome. Its function is as follows. One of shell proteins of the carboxysome, a polyhedral inclusion where RuBisCO (ribulose bisphosphate carboxylase, ccbL-ccbS) is sequestered. Assembles into hexamers which make sheets that form the facets of the polyhedral carboxysome. The shell probably limits the diffusion of CO(2) into and out of the carboxysome. There are estimated to be 2970 CsoS1A/CsoS1C proteins per carboxysome (the proteins differ by only 1 residue). Unlike beta-carboxysomes, alpha-carboxysomes (Cb) can form without cargo protein. CsoS2 is essential for Cb formation and is also capable of targeting foreign proteins to the Cb. The Cb shell assembles with the aid of CsoS2; CsoS1A, CsoS1B and CsoS1C form the majority of the shell while CsoS4A and CsoS4B form vertices. CsoS1D forms pseudohexamers that probably control metabolite flux into and out of the shell. In Halothiobacillus neapolitanus (strain ATCC 23641 / c2) (Thiobacillus neapolitanus), this protein is Carboxysome shell protein CsoS1C.